Consider the following 304-residue polypeptide: tRNA dimethylallyltransferase (304 aa).

Gly8–Ser15 serves as a coordination point for ATP. Thr10–Ser15 serves as a coordination point for substrate. Positions Asp33 to Gln36 are interaction with substrate tRNA.

It belongs to the IPP transferase family. As to quaternary structure, monomer. Mg(2+) is required as a cofactor.

The enzyme catalyses adenosine(37) in tRNA + dimethylallyl diphosphate = N(6)-dimethylallyladenosine(37) in tRNA + diphosphate. In terms of biological role, catalyzes the transfer of a dimethylallyl group onto the adenine at position 37 in tRNAs that read codons beginning with uridine, leading to the formation of N6-(dimethylallyl)adenosine (i(6)A). This is tRNA dimethylallyltransferase from Chlorobium luteolum (strain DSM 273 / BCRC 81028 / 2530) (Pelodictyon luteolum).